The primary structure comprises 472 residues: MAGASRLLFLWLGCFCVSLAQGERPKPPFPELRKAVPGDRTAGGGPDSELQPQDKVSEHMLRLYDRYSTVQAARTPGSLEGGSQPWRPRLLREGNTVRSFRAAAAETLERKGLYIFNLTSLTKSENILSATLYFCIGELGNISLSCPVSGGCSHHAQRKHIQIDLSAWTLKFSRNQSQLLGHLSVDMAKSHRDIMSWLSKDITQLLRKAKENEEFLIGFNITSKGRQLPKRRLPFPEPYILVYANDAAISEPESVVSSLQGHRNFPTGTVPKWDSHIRAALSIERRKKRSTGVLLPLQNNELPGAEYQYKKDEVWEERKPYKTLQAQAPEKSKNKKKQRKGPHRKSQTLQFDEQTLKKARRKQWIEPRNCARRYLKVDFADIGWSEWIISPKSFDAYYCSGACQFPMPKSLKPSNHATIQSIVRAVGVVPGIPEPCCVPEKMSSLSILFFDENKNVVLKVYPNMTVESCACR.

Residues 1–22 form the signal peptide; the sequence is MAGASRLLFLWLGCFCVSLAQG. Residues 23–362 constitute a propeptide that is removed on maturation; it reads ERPKPPFPEL…EQTLKKARRK (340 aa). A compositionally biased stretch (basic and acidic residues) spans 27-37; it reads PPFPELRKAVP. Positions 27 to 53 are disordered; that stretch reads PPFPELRKAVPGDRTAGGGPDSELQPQ. N-linked (GlcNAc...) asparagine glycans are attached at residues N117, N141, N175, and N220. The tract at residues 320–350 is disordered; sequence PYKTLQAQAPEKSKNKKKQRKGPHRKSQTLQ. Residues 333–346 are compositionally biased toward basic residues; that stretch reads KNKKKQRKGPHRKS. Disulfide bonds link C370–C437, C399–C469, and C403–C471. A glycan (N-linked (GlcNAc...) asparagine) is linked at N463.

Belongs to the TGF-beta family. In terms of assembly, homodimer; disulfide-linked. Interacts with type II receptor ACVR2B. Expressed in adult and fetal cartilage.

The protein localises to the secreted. Its function is as follows. Growth factor of the TGF-beta superfamily that plays an essential role in developmental process by inducing and patterning early skeletal formation and by negatively regulating bone density. Antagonizes the ability of certain osteogenic BMPs to induce osteoprogenitor differentiation and ossification. Initiates signaling cascades by associating with type II receptor ACVR2B to activate SMAD2-dependent and SMAD-independent signaling cascades including TAK1 and JNK pathways. In Homo sapiens (Human), this protein is Bone morphogenetic protein 3 (BMP3).